Consider the following 100-residue polypeptide: Mitochondrial zinc maintenance protein 1, mitochondrial (100 aa).

This sequence belongs to the complex I LYR family. MZM1 subfamily. Interacts with RIP1.

The protein resides in the mitochondrion matrix. Functionally, assembly factor required for Rieske Fe-S protein RIP1 incorporation into the cytochrome b-c1 (CIII) complex. Functions as a chaperone, binding to this subunit within the mitochondrial matrix and stabilizing it prior to its translocation and insertion into the late CIII dimeric intermediate within the mitochondrial inner membrane. Modulates the mitochondrial matrix zinc pool. The protein is Mitochondrial zinc maintenance protein 1, mitochondrial (new18) of Schizosaccharomyces pombe (strain 972 / ATCC 24843) (Fission yeast).